Consider the following 1352-residue polypeptide: Spike glycoprotein (1352 aa).

The N-terminal stretch at 1 to 12 (MIRSVLVLMCSL) is a signal peptide. Topologically, residues 13 to 1297 (TFIGNLTRGQ…GNYTFYQKWP (1285 aa)) are extracellular. One can recognise a BetaCoV S1-NTD domain in the interval 22–359 (QSVDMGHNGT…DDLAQLQCSY (338 aa)). 8 N-linked (GlcNAc...) asparagine; by host glycosylation sites follow: asparagine 29, asparagine 73, asparagine 111, asparagine 132, asparagine 167, asparagine 174, asparagine 244, and asparagine 250. A disulfide bridge links cysteine 193 with cysteine 245. Intrachain disulfides connect cysteine 347–cysteine 357 and cysteine 391–cysteine 415. One can recognise a BetaCoV S1-CTD domain in the interval 389–585 (QECDFTPMLT…GTDTNSVCPM (197 aa)). Asparagine 418 carries an N-linked (GlcNAc...) asparagine; by host glycan. Cystine bridges form between cysteine 433-cysteine 486 and cysteine 445-cysteine 583. 8 N-linked (GlcNAc...) asparagine; by host glycosylation sites follow: asparagine 495, asparagine 590, asparagine 617, asparagine 716, asparagine 760, asparagine 771, asparagine 782, and asparagine 867. Fusion peptide stretches follow at residues 885–906 (STIE…MQGY) and 904–926 (QGYD…AQYV). Residues cysteine 909 and cysteine 922 are joined by a disulfide bond. The interval 991-1041 (QKIIANKFNQALGAMQTGFTTTNLAFNKVQDAVNANAMALSKLAAELSNTF) is heptad repeat 1. The stretch at 1020–1064 (QDAVNANAMALSKLAAELSNTFGAISSSISDILARLDTVEQEAQI) forms a coiled coil. 8 N-linked (GlcNAc...) asparagine; by host glycosylation sites follow: asparagine 1145, asparagine 1172, asparagine 1214, asparagine 1226, asparagine 1242, asparagine 1257, asparagine 1278, and asparagine 1289. Positions 1247-1286 (GPNFQEISKINTTLLNLNTELMVLSEVVKQLNESYIDLKE) are heptad repeat 2. A coiled-coil region spans residues 1259 to 1287 (TLLNLNTELMVLSEVVKQLNESYIDLKEL). Residues 1298-1318 (WYIWLGFIAGLVALALCVFFI) traverse the membrane as a helical segment. The Cytoplasmic segment spans residues 1319–1352 (LCCTGCGTSCLGKLKCNRCCDSYDEYEVEKIHVH). Positions 1350-1352 (HVH) match the KxHxx motif.

This sequence belongs to the betacoronaviruses spike protein family. In terms of assembly, homotrimer; each monomer consists of a S1 and a S2 subunit. The resulting peplomers protrude from the virus surface as spikes. Post-translationally, specific enzymatic cleavages in vivo yield mature proteins. The precursor is processed into S1 and S2 by host cell furin or another cellular protease to yield the mature S1 and S2 proteins. Additionally, a second cleavage leads to the release of a fusion peptide after viral attachment to host cell receptor. In terms of processing, the cytoplasmic Cys-rich domain is palmitoylated. Spike glycoprotein is digested within host endosomes.

It localises to the virion membrane. The protein resides in the host endoplasmic reticulum-Golgi intermediate compartment membrane. It is found in the host cell membrane. Functionally, attaches the virion to the cell membrane by interacting with host receptor, initiating the infection. In terms of biological role, mediates fusion of the virion and cellular membranes by acting as a class I viral fusion protein. Under the current model, the protein has at least three conformational states: pre-fusion native state, pre-hairpin intermediate state, and post-fusion hairpin state. During viral and target cell membrane fusion, the coiled coil regions (heptad repeats) assume a trimer-of-hairpins structure, positioning the fusion peptide in close proximity to the C-terminal region of the ectodomain. The formation of this structure appears to drive apposition and subsequent fusion of viral and target cell membranes. Acts as a viral fusion peptide which is unmasked following S2 cleavage occurring upon virus endocytosis. The polypeptide is Spike glycoprotein (Bat coronavirus HKU5 (BtCoV)).